A 189-amino-acid chain; its full sequence is Interferon alpha-5 (189 aa).

The N-terminal stretch at 1–23 (MARLCAFLMVLPVLSYWPTCSLG) is a signal peptide. Disulfide bonds link Cys-24-Cys-122 and Cys-52-Cys-162. An N-linked (GlcNAc...) asparagine glycan is attached at Asn-101.

Belongs to the alpha/beta interferon family.

It localises to the secreted. Produced by macrophages, IFN-alpha have antiviral activities. Interferon stimulates the production of two enzymes: a protein kinase and an oligoadenylate synthetase. This Mus musculus (Mouse) protein is Interferon alpha-5 (Ifna5).